The primary structure comprises 304 residues: Cell surface-binding protein OPG105 (304 aa).

The Alpha-carbonic anhydrase domain occupies 1 to 235 (MSQQLSPINI…NDDTEVYYSG (235 aa)). The Virion surface portion of the chain corresponds to 1–275 (MSQQLSPINI…YQKYIEGNKT (275 aa)). The helical transmembrane segment at 276–294 (FAIIAIVFVYILTAILFLM) threads the bilayer. Residues 295-304 (SRRYSREKQN) are Intravirion-facing.

It belongs to the alpha-carbonic anhydrase family. Homodimer; disulfide-linked. Apparently non-glycosylated.

It localises to the virion membrane. Its function is as follows. Binds to chondroitin sulfate on the cell surface to provide virion attachment to target cell. This Homo sapiens (Human) protein is Cell surface-binding protein OPG105 (OPG105).